The sequence spans 577 residues: Leucine-rich repeat protein soc-2 homolog (577 aa).

Basic and acidic residues-rich tracts occupy residues 1-10 (MRRTKGRTDS) and 33-48 (STAH…EAKK). Positions 1 to 71 (MRRTKGRTDS…PTVKKRSTPS (71 aa)) are disordered. LRR repeat units follow at residues 87–109 (GATR…KELT), 110–131 (SLRE…VGLL), 133–155 (NLET…VKLT), 156–177 (KLKV…IYKL), 179–201 (TLTT…GNLK), 202–223 (LLER…IGQL), 225–246 (HLVT…IGNC), 248–269 (HMTS…IGRL), 271–292 (AMTR…LANC), 294–315 (GIDE…LLSS), 318–339 (NLTS…PPKQ), 342–363 (QVNT…VFNK), 366–387 (YLSK…FGSW), 389–410 (SLVE…IQWL), 412–434 (NLEV…GALR), 435–456 (KLRV…IEYL), 458–479 (SLER…IGYL), 481–502 (SVTY…IGNM), 504–526 (SLEQ…LVLC), and 528–549 (SLQI…IVAG).

It belongs to the SHOC2 family.

Its function is as follows. Acts as a Ras effector and participates in MAPK pathway activation. Probably acts as a scaffolding protein in a protein phosphatase complex that specifically dephosphorylates Raf kinase and stimulate Raf activity at specialized signaling complexes upon Ras activation. This Nematostella vectensis (Starlet sea anemone) protein is Leucine-rich repeat protein soc-2 homolog.